Here is a 269-residue protein sequence, read N- to C-terminus: MEMO1 family protein TV1383 (269 aa).

It belongs to the MEMO1 family.

This is MEMO1 family protein TV1383 from Thermoplasma volcanium (strain ATCC 51530 / DSM 4299 / JCM 9571 / NBRC 15438 / GSS1).